We begin with the raw amino-acid sequence, 222 residues long: Protein GrpE (222 aa).

Disordered regions lie at residues 1-21 (MNDG…ENGQ) and 200-222 (KGGP…PEGA).

The protein belongs to the GrpE family. As to quaternary structure, homodimer.

The protein localises to the cytoplasm. Participates actively in the response to hyperosmotic and heat shock by preventing the aggregation of stress-denatured proteins, in association with DnaK and GrpE. It is the nucleotide exchange factor for DnaK and may function as a thermosensor. Unfolded proteins bind initially to DnaJ; upon interaction with the DnaJ-bound protein, DnaK hydrolyzes its bound ATP, resulting in the formation of a stable complex. GrpE releases ADP from DnaK; ATP binding to DnaK triggers the release of the substrate protein, thus completing the reaction cycle. Several rounds of ATP-dependent interactions between DnaJ, DnaK and GrpE are required for fully efficient folding. The sequence is that of Protein GrpE from Chelativorans sp. (strain BNC1).